Consider the following 306-residue polypeptide: Homoserine kinase (306 aa).

P90–S100 provides a ligand contact to ATP.

It belongs to the GHMP kinase family. Homoserine kinase subfamily.

The protein resides in the cytoplasm. It carries out the reaction L-homoserine + ATP = O-phospho-L-homoserine + ADP + H(+). It functions in the pathway amino-acid biosynthesis; L-threonine biosynthesis; L-threonine from L-aspartate: step 4/5. In terms of biological role, catalyzes the ATP-dependent phosphorylation of L-homoserine to L-homoserine phosphate. This Staphylococcus epidermidis (strain ATCC 35984 / DSM 28319 / BCRC 17069 / CCUG 31568 / BM 3577 / RP62A) protein is Homoserine kinase.